A 252-amino-acid chain; its full sequence is Triosephosphate isomerase (252 aa).

10–12 (NWK) lines the substrate pocket. The active-site Electrophile is histidine 96. Glutamate 168 functions as the Proton acceptor in the catalytic mechanism. Substrate contacts are provided by residues glycine 174, serine 214, and 235-236 (GG).

This sequence belongs to the triosephosphate isomerase family. As to quaternary structure, homodimer.

It is found in the cytoplasm. It carries out the reaction D-glyceraldehyde 3-phosphate = dihydroxyacetone phosphate. Its pathway is carbohydrate biosynthesis; gluconeogenesis. It functions in the pathway carbohydrate degradation; glycolysis; D-glyceraldehyde 3-phosphate from glycerone phosphate: step 1/1. Functionally, seems to be capable of enhancing bacteriocin synthesis. Its function is as follows. Involved in the gluconeogenesis. Catalyzes stereospecifically the conversion of dihydroxyacetone phosphate (DHAP) to D-glyceraldehyde-3-phosphate (G3P). The polypeptide is Triosephosphate isomerase (Lactobacillus delbrueckii subsp. lactis).